Consider the following 483-residue polypeptide: Proton-coupled amino acid transporter 2 (483 aa).

The Cytoplasmic portion of the chain corresponds to 1–58 (MSVTKSTEGPQGAVAIKLDLMSPPESAKKLENKDSTFLDESPSESAGLKKTKGITVFQ). The segment covering 26–36 (SAKKLENKDST) has biased composition (basic and acidic residues). The disordered stretch occupies residues 26 to 46 (SAKKLENKDSTFLDESPSESA). Residues 59-79 (ALIHLVKGNMGTGILGLPLAV) form a helical membrane-spanning segment. The Extracellular segment spans residues 80–81 (KN). A helical transmembrane segment spans residues 82 to 102 (AGILMGPLSLLVMGFIACHCM). The Cytoplasmic portion of the chain corresponds to 103–148 (HILVKCAQRFCKRLNKPFMDYGDTVMHGLEANPNAWLQNHAHWGRH). A helical membrane pass occupies residues 149-169 (IVSFFLIITQLGFCCVYIVFL). At 170-197 (ADNLKQVVEAVNSTTNNCYSNETVILTP) the chain is on the extracellular side. Residues 198–218 (TMDSRLYMLSFLPFLVLLVLI) traverse the membrane as a helical segment. Over 219 to 222 (RNLR) the chain is Cytoplasmic. Residues 223-243 (ILTIFSMLANISMLVSLVIII) form a helical membrane-spanning segment. At 244-264 (QYITQEIPDPSRLPLVASWKT) the chain is on the extracellular side. Residues 265 to 285 (YPLFFGTAIFSFESIGVVLPL) traverse the membrane as a helical segment. The Cytoplasmic segment spans residues 286–296 (ENKMKNARHFP). The chain crosses the membrane as a helical span at residues 297-317 (AILSLGMSIVTSLYIGMAALG). At 318–349 (YLRFGDDIKASISLNLPNCWLYQSVKLLYIAG) the chain is on the extracellular side. The helical transmembrane segment at 350–370 (ILCTYALQFYVPAEIIIPFAI) threads the bilayer. Residues 371-379 (SRVSTRWAL) are Cytoplasmic-facing. A helical transmembrane segment spans residues 380-400 (PLDLSIRLVMVCLTCLLAILI). Topologically, residues 401–404 (PRLD) are extracellular. Residues 405-425 (LVISLVGSVSGTALALIIPPL) form a helical membrane-spanning segment. Residues 426–437 (LEVTTFYSEGMS) are Cytoplasmic-facing. A helical transmembrane segment spans residues 438–458 (PLTIFKDALISILGFVGFVVG). Over 459–483 (TYQALDELLKSEDSHPFSNSTTFVR) the chain is Extracellular.

It belongs to the amino acid/polyamine transporter 2 family. Abundantly expressed in kidney and muscle. Expressed in the S1 segment of the proximal tubule close to the glomerulus.

The protein resides in the cell membrane. It is found in the endoplasmic reticulum membrane. The protein localises to the recycling endosome membrane. The enzyme catalyses glycine(in) + H(+)(in) = glycine(out) + H(+)(out). It catalyses the reaction L-alanine(in) + H(+)(in) = L-alanine(out) + H(+)(out). The catalysed reaction is D-alanine(in) + H(+)(in) = D-alanine(out) + H(+)(out). It carries out the reaction L-proline(out) + H(+)(out) = L-proline(in) + H(+)(in). The enzyme catalyses D-proline(out) + H(+)(out) = D-proline(in) + H(+)(in). It catalyses the reaction 4-hydroxy-L-proline(in) + H(+)(in) = 4-hydroxy-L-proline(out) + H(+)(out). The catalysed reaction is L-serine(in) + H(+)(in) = L-serine(out) + H(+)(out). It carries out the reaction D-serine(out) + H(+)(out) = D-serine(in) + H(+)(in). The enzyme catalyses beta-alanine(in) + H(+)(in) = beta-alanine(out) + H(+)(out). It catalyses the reaction 4-aminobutanoate(in) + H(+)(in) = 4-aminobutanoate(out) + H(+)(out). The catalysed reaction is sarcosine(in) + H(+)(in) = sarcosine(out) + H(+)(out). It carries out the reaction N,N-dimethylglycine(in) + H(+)(in) = N,N-dimethylglycine(out) + H(+)(out). Functionally, electrogenic proton/amino acid symporter with a high selectivity for the small side chains amino acids glycine, alanine and proline, where both L- and D-enantiomers are transported. Extension of the backbone length, as in beta-alanine and 4-aminobutanoate or methylation of the amino group, as in sarcosine and N,N-dimethylglycine, are also tolerated but decrease transport efficiency. A free carboxyl group is preferred. The polypeptide is Proton-coupled amino acid transporter 2 (Homo sapiens (Human)).